An 86-amino-acid chain; its full sequence is MLVIRLARGGSKKRPFYNLVATDSRNRRDGRFVERVGFYNPVAAEGTENLRIALDRVQYWTGNGALLSPAVERLVKEYSAKVSAAA.

Belongs to the bacterial ribosomal protein bS16 family.

This chain is Small ribosomal subunit protein bS16, found in Bordetella bronchiseptica (strain ATCC BAA-588 / NCTC 13252 / RB50) (Alcaligenes bronchisepticus).